The sequence spans 414 residues: Serine hydroxymethyltransferase (414 aa).

(6S)-5,6,7,8-tetrahydrofolate contacts are provided by residues leucine 116 and 120 to 122 (GHL). Position 224 is an N6-(pyridoxal phosphate)lysine (lysine 224). 348–350 (SPF) is a (6S)-5,6,7,8-tetrahydrofolate binding site.

The protein belongs to the SHMT family. In terms of assembly, homodimer. Pyridoxal 5'-phosphate is required as a cofactor.

Its subcellular location is the cytoplasm. It catalyses the reaction (6R)-5,10-methylene-5,6,7,8-tetrahydrofolate + glycine + H2O = (6S)-5,6,7,8-tetrahydrofolate + L-serine. Its pathway is one-carbon metabolism; tetrahydrofolate interconversion. It participates in amino-acid biosynthesis; glycine biosynthesis; glycine from L-serine: step 1/1. In terms of biological role, catalyzes the reversible interconversion of serine and glycine with tetrahydrofolate (THF) serving as the one-carbon carrier. This reaction serves as the major source of one-carbon groups required for the biosynthesis of purines, thymidylate, methionine, and other important biomolecules. Also exhibits THF-independent aldolase activity toward beta-hydroxyamino acids, producing glycine and aldehydes, via a retro-aldol mechanism. The protein is Serine hydroxymethyltransferase of Campylobacter jejuni subsp. doylei (strain ATCC BAA-1458 / RM4099 / 269.97).